The chain runs to 126 residues: MIRRGTYLNTADNSGAKKVQCIGIPKKVNFGKQTDFATLGDVITVTVKDALPNGAAKKGKVYKAVVVRTAKEVSREDGSYIKFDDNAVVLLNNNLEPIGTRILGPVAREIRAKGFYRIVSLAPEVI.

The protein belongs to the universal ribosomal protein uL14 family. In terms of assembly, part of the 50S ribosomal subunit. Forms a cluster with proteins L3 and L19. In the 70S ribosome, L14 and L19 interact and together make contacts with the 16S rRNA in bridges B5 and B8.

Binds to 23S rRNA. Forms part of two intersubunit bridges in the 70S ribosome. The chain is Large ribosomal subunit protein uL14 from Persephonella marina (strain DSM 14350 / EX-H1).